A 196-amino-acid polypeptide reads, in one-letter code: NADH-quinone oxidoreductase subunit B (196 aa).

[4Fe-4S] cluster-binding residues include Cys-63, Cys-64, Cys-129, and Cys-159.

Belongs to the complex I 20 kDa subunit family. In terms of assembly, NDH-1 is composed of 14 different subunits. Subunits NuoB, C, D, E, F, and G constitute the peripheral sector of the complex. [4Fe-4S] cluster is required as a cofactor.

Its subcellular location is the cell inner membrane. The catalysed reaction is a quinone + NADH + 5 H(+)(in) = a quinol + NAD(+) + 4 H(+)(out). Its function is as follows. NDH-1 shuttles electrons from NADH, via FMN and iron-sulfur (Fe-S) centers, to quinones in the respiratory chain. The immediate electron acceptor for the enzyme in this species is believed to be a menaquinone. Couples the redox reaction to proton translocation (for every two electrons transferred, four hydrogen ions are translocated across the cytoplasmic membrane), and thus conserves the redox energy in a proton gradient. This Bacteroides fragilis (strain ATCC 25285 / DSM 2151 / CCUG 4856 / JCM 11019 / LMG 10263 / NCTC 9343 / Onslow / VPI 2553 / EN-2) protein is NADH-quinone oxidoreductase subunit B.